The chain runs to 294 residues: uncharacterized protein (294 aa).

The disordered stretch occupies residues 1 to 215; the sequence is MTTAITPDKK…DQDDDDQKDL (215 aa). Basic residues-rich tracts occupy residues 27 to 43 and 50 to 78; these read TKPRRSSKTSKKRKSKK and AKKRKTKRSKKSAKRTKRSAPKKAPKKAP. The span at 79-88 shows a compositional bias: low complexity; that stretch reads MKAPSKPAAK. Residues 92–102 show a composition bias toward polar residues; it reads QQAQASLQKPI. Pro residues predominate over residues 118-136; sequence PRPPTPIPPTGVKPEPAPR. Low complexity predominate over residues 145–160; the sequence is SVSSTTPRTSATTGTT.

This is an uncharacterized protein from Caenorhabditis elegans.